Here is a 322-residue protein sequence, read N- to C-terminus: Aspartate carbamoyltransferase catalytic subunit (322 aa).

Residues Arg65 and Thr66 each coordinate carbamoyl phosphate. Lys93 is an L-aspartate binding site. Positions 115, 143, and 146 each coordinate carbamoyl phosphate. Residues Arg176 and Arg230 each coordinate L-aspartate. Residues Gly271 and Pro272 each coordinate carbamoyl phosphate.

This sequence belongs to the aspartate/ornithine carbamoyltransferase superfamily. ATCase family. As to quaternary structure, heterododecamer (2C3:3R2) of six catalytic PyrB chains organized as two trimers (C3), and six regulatory PyrI chains organized as three dimers (R2).

The catalysed reaction is carbamoyl phosphate + L-aspartate = N-carbamoyl-L-aspartate + phosphate + H(+). It functions in the pathway pyrimidine metabolism; UMP biosynthesis via de novo pathway; (S)-dihydroorotate from bicarbonate: step 2/3. Its function is as follows. Catalyzes the condensation of carbamoyl phosphate and aspartate to form carbamoyl aspartate and inorganic phosphate, the committed step in the de novo pyrimidine nucleotide biosynthesis pathway. The protein is Aspartate carbamoyltransferase catalytic subunit of Brucella canis (strain ATCC 23365 / NCTC 10854 / RM-666).